We begin with the raw amino-acid sequence, 349 residues long: Cytoplasmic tRNA 2-thiolation protein 2 (349 aa).

This sequence belongs to the CTU2/NCS2 family.

It localises to the cytoplasm. Its pathway is tRNA modification; 5-methoxycarbonylmethyl-2-thiouridine-tRNA biosynthesis. Its function is as follows. Plays a central role in 2-thiolation of mcm(5)S(2)U at tRNA wobble positions of tRNA(Lys), tRNA(Glu) and tRNA(Gln). May act by forming a heterodimer with tut-1/ctu-1 that ligates sulfur from thiocarboxylated urm-1 onto the uridine of tRNAs at wobble position. This Caenorhabditis briggsae protein is Cytoplasmic tRNA 2-thiolation protein 2.